Consider the following 158-residue polypeptide: NAD(P)H-quinone oxidoreductase subunit J, chloroplastic (158 aa).

Belongs to the complex I 30 kDa subunit family. In terms of assembly, NDH is composed of at least 16 different subunits, 5 of which are encoded in the nucleus.

Its subcellular location is the plastid. It localises to the chloroplast thylakoid membrane. It carries out the reaction a plastoquinone + NADH + (n+1) H(+)(in) = a plastoquinol + NAD(+) + n H(+)(out). The catalysed reaction is a plastoquinone + NADPH + (n+1) H(+)(in) = a plastoquinol + NADP(+) + n H(+)(out). Functionally, NDH shuttles electrons from NAD(P)H:plastoquinone, via FMN and iron-sulfur (Fe-S) centers, to quinones in the photosynthetic chain and possibly in a chloroplast respiratory chain. The immediate electron acceptor for the enzyme in this species is believed to be plastoquinone. Couples the redox reaction to proton translocation, and thus conserves the redox energy in a proton gradient. This is NAD(P)H-quinone oxidoreductase subunit J, chloroplastic from Angiopteris evecta (Mule's foot fern).